The primary structure comprises 79 residues: Sulfur carrier protein TusA (79 aa).

Residue C17 is the Cysteine persulfide intermediate of the active site.

Belongs to the sulfur carrier protein TusA family.

It is found in the cytoplasm. Sulfur carrier protein which probably makes part of a sulfur-relay system. The sequence is that of Sulfur carrier protein TusA from Actinobacillus pleuropneumoniae serotype 7 (strain AP76).